Here is a 399-residue protein sequence, read N- to C-terminus: Coiled-coil domain-containing protein 85C-B (399 aa).

2 coiled-coil regions span residues 52–84 (NRSL…ELCC) and 113–144 (KEVS…DIIL). A disordered region spans residues 151–199 (NGAGSRSSIDSQSSLSNLNGGSGTVRDVGDGSSTSSGGSAGSPDHHHNH). Residues 155–169 (SRSSIDSQSSLSNLN) show a composition bias toward low complexity.

It belongs to the CCDC85 family.

It is found in the cell junction. Its subcellular location is the tight junction. The protein resides in the adherens junction. In terms of biological role, may play a role in cell-cell adhesion and epithelium development through its interaction with proteins of the beta-catenin family. May play an important role in cortical development, especially in the maintenance of radial glia. The sequence is that of Coiled-coil domain-containing protein 85C-B (ccdc85cb) from Danio rerio (Zebrafish).